We begin with the raw amino-acid sequence, 621 residues long: UvrABC system protein C (621 aa).

One can recognise a GIY-YIG domain in the interval 11–90; the sequence is TTPGVYLYKD…IKKHRPRYNI (80 aa). Residues 200-235 form the UVR domain; sequence KELVELLQKDMLYASEALEFEKAATLRDQIQAIKHT.

Belongs to the UvrC family. In terms of assembly, interacts with UvrB in an incision complex.

It localises to the cytoplasm. Its function is as follows. The UvrABC repair system catalyzes the recognition and processing of DNA lesions. UvrC both incises the 5' and 3' sides of the lesion. The N-terminal half is responsible for the 3' incision and the C-terminal half is responsible for the 5' incision. In Lawsonia intracellularis (strain PHE/MN1-00), this protein is UvrABC system protein C.